A 203-amino-acid polypeptide reads, in one-letter code: Nudix hydrolase 12, mitochondrial (203 aa).

One can recognise a Nudix hydrolase domain in the interval 18 to 166; that stretch reads NFRLVSGCIP…WMQRALEEFL (149 aa). The Nudix box motif lies at 66 to 87; it reads GGWEDDETVLEAASREAIEEAG. Residues E81 and E85 each contribute to the Mg(2+) site.

Belongs to the Nudix hydrolase family. The cofactor is Mg(2+). Mn(2+) serves as cofactor. In terms of tissue distribution, expressed in roots, leaves, stems and inflorescences.

Its subcellular location is the mitochondrion. In terms of biological role, probably mediates the hydrolysis of some nucleoside diphosphate derivatives. In Arabidopsis thaliana (Mouse-ear cress), this protein is Nudix hydrolase 12, mitochondrial (NUDT12).